The primary structure comprises 165 residues: Lithostathine-1 (165 aa).

Residues 1 to 21 (MARNAYFILLSCLIVLSPSQG) form the signal peptide. Q22 is modified (pyrrolidone carboxylic acid). Positions 33 to 163 (ISCPEGSNAY…DAQYSFVCKF (131 aa)) constitute a C-type lectin domain. 3 disulfides stabilise this stretch: C35–C46, C63–C161, and C136–C153. A glycan (N-linked (GlcNAc...) asparagine) is linked at N129.

Expressed only in regenerating islets and normal exocrine pancreas, but not in normal pancreatic islets. Expressed strongly in pancreas, moderately in gall bladder, and weakly in liver.

The protein localises to the secreted. Might act as an inhibitor of spontaneous calcium carbonate precipitation. The polypeptide is Lithostathine-1 (Reg1) (Mus musculus (Mouse)).